The chain runs to 150 residues: Large ribosomal subunit protein bL9 (150 aa).

Belongs to the bacterial ribosomal protein bL9 family.

Binds to the 23S rRNA. The chain is Large ribosomal subunit protein bL9 from Verminephrobacter eiseniae (strain EF01-2).